The following is a 338-amino-acid chain: UDP-3-O-acylglucosamine N-acyltransferase (338 aa).

Residue His239 is the Proton acceptor of the active site.

This sequence belongs to the transferase hexapeptide repeat family. LpxD subfamily. As to quaternary structure, homotrimer.

The enzyme catalyses a UDP-3-O-[(3R)-3-hydroxyacyl]-alpha-D-glucosamine + a (3R)-hydroxyacyl-[ACP] = a UDP-2-N,3-O-bis[(3R)-3-hydroxyacyl]-alpha-D-glucosamine + holo-[ACP] + H(+). It functions in the pathway bacterial outer membrane biogenesis; LPS lipid A biosynthesis. Functionally, catalyzes the N-acylation of UDP-3-O-acylglucosamine using 3-hydroxyacyl-ACP as the acyl donor. Is involved in the biosynthesis of lipid A, a phosphorylated glycolipid that anchors the lipopolysaccharide to the outer membrane of the cell. This is UDP-3-O-acylglucosamine N-acyltransferase from Xylella fastidiosa (strain M23).